The sequence spans 524 residues: Protopine 6-monooxygenase (524 aa).

A run of 3 helical transmembrane segments spans residues 4–24 (LMLA…VFLY), 232–252 (LASL…DIFQ), and 319–339 (MIMG…SLLM). Residue Cys-462 participates in heme binding.

It belongs to the cytochrome P450 family. Heme serves as cofactor.

It localises to the endoplasmic reticulum membrane. The catalysed reaction is protopine + reduced [NADPH--hemoprotein reductase] + O2 = 6-hydroxyprotopine + oxidized [NADPH--hemoprotein reductase] + H2O + H(+). Its pathway is alkaloid biosynthesis. Functionally, catalyzes the conversion of protopine and allocryptopine to dihydrosanguinarine and dihydrochelerythrine, respectively, in the biosynthesis of isoquinoline alkaloid sanguinarine. This is Protopine 6-monooxygenase (CYP82N2v2) from Eschscholzia californica (California poppy).